A 185-amino-acid polypeptide reads, in one-letter code: Iron-sulfur assembly protein 2 (185 aa).

Residues Cys89, Cys175, and Cys177 each coordinate Fe cation.

This sequence belongs to the HesB/IscA family.

It is found in the mitochondrion matrix. Functionally, involved in the assembly of mitochondrial and cytoplasmic iron-sulfur proteins. Probably involved in the binding of an intermediate of Fe/S cluster assembly. The protein is Iron-sulfur assembly protein 2 (ISA2) of Saccharomyces cerevisiae (strain ATCC 204508 / S288c) (Baker's yeast).